The sequence spans 258 residues: Type III pantothenate kinase (258 aa).

Residue 6 to 13 (DVGNSDTV) coordinates ATP. 108 to 111 (GSDR) serves as a coordination point for substrate. D110 serves as the catalytic Proton acceptor. D130 contributes to the K(+) binding site. T133 contacts ATP. Position 185 (T185) interacts with substrate.

This sequence belongs to the type III pantothenate kinase family. As to quaternary structure, homodimer. NH4(+) serves as cofactor. The cofactor is K(+).

Its subcellular location is the cytoplasm. It carries out the reaction (R)-pantothenate + ATP = (R)-4'-phosphopantothenate + ADP + H(+). It participates in cofactor biosynthesis; coenzyme A biosynthesis; CoA from (R)-pantothenate: step 1/5. Catalyzes the phosphorylation of pantothenate (Pan), the first step in CoA biosynthesis. This is Type III pantothenate kinase from Thermobifida fusca (strain YX).